Consider the following 869-residue polypeptide: TATA box-binding protein-associated factor RNA polymerase I subunit C (869 aa).

Disordered regions lie at residues 605 to 629 (SSLR…ASWT) and 729 to 869 (GAAW…RMGF). At Thr834 the chain carries Phosphothreonine. A compositionally biased stretch (polar residues) spans 835–860 (PPHSQASSVRATRSQQHTPVLSSSQP). At Ser848 the chain carries Phosphoserine.

In terms of assembly, component of the transcription factor SL1/TIF-IB complex, composed of TBP and at least TAF1A, TAF1B, TAF1C and TAF1D. In the complex interacts directly with TBP, TAF1A and TAF1B. Interaction of the SL1/TIF-IB subunits with TBP excludes interaction of TBP with the transcription factor IID (TFIID) subunits. Interacts with MYC and RRN3. Interacts with p53/TP53; the interaction prevents the association of SL1/TIF-IB with UBTF and represses RNA polymerase I transcription. Part of Pol I pre-initiation complex (PIC), in which Pol I core assembles with RRN3 and promoter-bound UTBF and SL1/TIF-IB complex.

It is found in the nucleus. The protein localises to the nucleolus. Component of the transcription factor SL1/TIF-IB complex, which is involved in the assembly of the PIC (pre-initiation complex) during RNA polymerase I-dependent transcription. The rate of PIC formation probably is primarily dependent on the rate of association of SL1/TIF-IB with the rDNA promoter. SL1/TIF-IB is involved in stabilization of nucleolar transcription factor 1/UBTF on rDNA. Formation of SL1/TIF-IB excludes the association of TBP with TFIID subunits. Recruits RNA polymerase I to the rRNA gene promoter via interaction with RRN3. This chain is TATA box-binding protein-associated factor RNA polymerase I subunit C (TAF1C), found in Homo sapiens (Human).